The chain runs to 30 residues: LQPKLEYQYKYHGIVALGIPSYKTQFYDAH.

Homodimer. Secreted into the hemolymph.

The protein localises to the secreted. It localises to the extracellular space. Its function is as follows. Clotting protein. The sequence is that of Fibrinogen from Panulirus interruptus (California spiny lobster).